The primary structure comprises 346 residues: Putative transmembrane protein ORF346 (346 aa).

Transmembrane regions (helical) follow at residues leucine 67–tyrosine 87, isoleucine 104–threonine 124, proline 134–tyrosine 154, alanine 156–isoleucine 176, isoleucine 181–serine 201, and tyrosine 219–tyrosine 241. The tract at residues serine 294 to glycine 346 is disordered. The segment covering glycine 302–glycine 346 has biased composition (gly residues).

It is found in the host membrane. The polypeptide is Putative transmembrane protein ORF346 (Acidianus bottle-shaped virus (isolate Italy/Pozzuoli) (ABV)).